A 564-amino-acid polypeptide reads, in one-letter code: Arginine--tRNA ligase (564 aa).

Positions 122-132 (PNIAKPFSIGH) match the 'HIGH' region motif.

Belongs to the class-I aminoacyl-tRNA synthetase family. In terms of assembly, monomer.

It localises to the cytoplasm. The catalysed reaction is tRNA(Arg) + L-arginine + ATP = L-arginyl-tRNA(Arg) + AMP + diphosphate. In Lactococcus lactis subsp. cremoris (strain MG1363), this protein is Arginine--tRNA ligase.